A 249-amino-acid polypeptide reads, in one-letter code: Adenosylcobinamide-GDP ribazoletransferase (249 aa).

The next 6 helical transmembrane spans lie at 32–52 (MVAF…TWFG), 53–73 (ATWL…WGAI), 107–127 (IGTM…LFVL), 136–156 (ALIV…FWFP), 190–210 (LLWW…IIIA), and 224–244 (TYGA…AALV).

It belongs to the CobS family. Requires Mg(2+) as cofactor.

The protein localises to the cell membrane. The enzyme catalyses alpha-ribazole + adenosylcob(III)inamide-GDP = adenosylcob(III)alamin + GMP + H(+). It carries out the reaction alpha-ribazole 5'-phosphate + adenosylcob(III)inamide-GDP = adenosylcob(III)alamin 5'-phosphate + GMP + H(+). It participates in cofactor biosynthesis; adenosylcobalamin biosynthesis; adenosylcobalamin from cob(II)yrinate a,c-diamide: step 7/7. Functionally, joins adenosylcobinamide-GDP and alpha-ribazole to generate adenosylcobalamin (Ado-cobalamin). Also synthesizes adenosylcobalamin 5'-phosphate from adenosylcobinamide-GDP and alpha-ribazole 5'-phosphate. The polypeptide is Adenosylcobinamide-GDP ribazoletransferase (Herpetosiphon aurantiacus (strain ATCC 23779 / DSM 785 / 114-95)).